A 363-amino-acid polypeptide reads, in one-letter code: Photosystem II protein D1 1 (363 aa).

A run of 3 helical transmembrane segments spans residues tyrosine 32 to isoleucine 49, histidine 121 to leucine 136, and tryptophan 145 to alanine 159. Chlorophyll a is bound at residue histidine 121. Tyrosine 129 lines the pheophytin a pocket. Residues glutamate 173 and glutamate 192 each coordinate [CaMn4O5] cluster. The chain crosses the membrane as a helical span at residues phenylalanine 200–leucine 221. Histidine 201 is a chlorophyll a binding site. Residues histidine 218 and alanine 268 to phenylalanine 269 contribute to the a quinone site. Position 218 (histidine 218) interacts with Fe cation. Histidine 276 contacts Fe cation. Residues leucine 278–leucine 292 form a helical membrane-spanning segment. Residues histidine 336 and alanine 348 each contribute to the [CaMn4O5] cluster site. Positions serine 349–serine 363 are excised as a propeptide.

Belongs to the reaction center PufL/M/PsbA/D family. PSII is composed of 1 copy each of membrane proteins PsbA, PsbB, PsbC, PsbD, PsbE, PsbF, PsbH, PsbI, PsbJ, PsbK, PsbL, PsbM, PsbT, PsbX, PsbY, PsbZ, Psb30/Ycf12, peripheral proteins PsbO, CyanoQ (PsbQ), PsbU, PsbV and a large number of cofactors. It forms dimeric complexes. The D1/D2 heterodimer binds P680, chlorophylls that are the primary electron donor of PSII, and subsequent electron acceptors. It shares a non-heme iron and each subunit binds pheophytin, quinone, additional chlorophylls, carotenoids and lipids. D1 provides most of the ligands for the Mn4-Ca-O5 cluster of the oxygen-evolving complex (OEC). There is also a Cl(-1) ion associated with D1 and D2, which is required for oxygen evolution. The PSII complex binds additional chlorophylls, carotenoids and specific lipids. serves as cofactor. In terms of processing, tyr-164 forms a radical intermediate that is referred to as redox-active TyrZ, YZ or Y-Z. C-terminally processed by CtpA; processing is essential to allow assembly of the oxygen-evolving complex and thus photosynthetic growth.

The protein resides in the cellular thylakoid membrane. The enzyme catalyses 2 a plastoquinone + 4 hnu + 2 H2O = 2 a plastoquinol + O2. In terms of biological role, photosystem II (PSII) is a light-driven water:plastoquinone oxidoreductase that uses light energy to abstract electrons from H(2)O, generating O(2) and a proton gradient subsequently used for ATP formation. It consists of a core antenna complex that captures photons, and an electron transfer chain that converts photonic excitation into a charge separation. The D1/D2 (PsbA/PsbD) reaction center heterodimer binds P680, the primary electron donor of PSII as well as several subsequent electron acceptors. The chain is Photosystem II protein D1 1 from Acaryochloris marina (strain MBIC 11017).